Here is a 310-residue protein sequence, read N- to C-terminus: Proline iminopeptidase (310 aa).

The AB hydrolase-1 domain maps to 33–290 (PVIFLHGGPG…RVVQAGHCAF (258 aa)). The Nucleophile role is filled by S107. D260 is a catalytic residue. The active-site Proton donor is the H287.

The protein belongs to the peptidase S33 family.

The protein localises to the cytoplasm. The enzyme catalyses Release of N-terminal proline from a peptide.. Its function is as follows. Hydrolyzes peptides having the structure Pro-Y-Z to yield free proline. Also hydrolyzes the dipeptide Pro-Gly. This Neisseria gonorrhoeae protein is Proline iminopeptidase (pip).